A 612-amino-acid chain; its full sequence is MGPSVRPGFLVVVIGLQFVAASMEVNSRKFEPMVAFICNKPAMHRVPSGWVPDDDPAKSCVKQPEEILEYCKKLYPDHDITNVLQASYKVTIPNWCGFNVTHCHKHGNHTVRPFRCLVGPFQSEALLVPEHCIFDHYHDPRVCNEFDQCNETAMSKCSARGMTTQSFAMLWPCQEPGHFSGVEFVCCPKVSLIPESTEAPKSSPPTPAKTENGLDDYTAYLKGDSKYMSKYANEHERFKAAEKVMQQFQRERDTKMMKDWKAARDSVREKKKTDPKKAMELNKELTERYQKIYHAYEQESIAEKKQLVNTHQQHIQSWLNNRKQVLMEKLQDALLAKPPKKSKIEKAATAYIKVEEKDKMHTYNHFQHLRDTDPEDAANIQDRVLEHLNLIDDRIRRVLDWLKRDPEIEKQVRPNIDKFMAKYKDINANSMKLLLRQEPTPKEAPVETQKAEDYSEEDEAAVTGTANKVKPTEARPEQQEDIKTPGFDSETFEDERPAIAEQTIHDLPNHRKKGYIAHVQQQPMIADEVSLDNLYANSHANSVLGIAIGGVVVFIIIVVAVVMLKRRTQRQRVTHGFVEVDPAASPEERHVANMQMSGYENPTYKYFEMQNQ.

The N-terminal stretch at 1 to 21 is a signal peptide; it reads MGPSVRPGFLVVVIGLQFVAA. Residues 22–542 lie on the Extracellular side of the membrane; the sequence is SMEVNSRKFE…NLYANSHANS (521 aa). Positions 28–122 are GFLD subdomain; the sequence is RKFEPMVAFI…PFRCLVGPFQ (95 aa). One can recognise an E1 domain in the interval 28 to 189; sequence RKFEPMVAFI…SGVEFVCCPK (162 aa). 6 cysteine pairs are disulfide-bonded: Cys-38/Cys-60, Cys-71/Cys-116, Cys-96/Cys-103, Cys-132/Cys-187, Cys-143/Cys-173, and Cys-157/Cys-186. N-linked (GlcNAc...) asparagine glycosylation is found at Asn-99, Asn-108, and Asn-150. Residues 130-189 are cuBD subdomain; that stretch reads EHCIFDHYHDPRVCNEFDQCNETAMSKCSARGMTTQSFAMLWPCQEPGHFSGVEFVCCPK. The 197-residue stretch at 223-419 folds into the E2 domain; that stretch reads GDSKYMSKYA…KQVRPNIDKF (197 aa). Disordered regions lie at residues 251–276 and 437–490; these read ERDT…TDPK and QEPT…FDSE. 2 stretches are compositionally biased toward basic and acidic residues: residues 439–453 and 470–483; these read PTPK…KAED and KPTE…EDIK. Residues 543 to 563 form a helical membrane-spanning segment; sequence VLGIAIGGVVVFIIIVVAVVM. Residues 564–612 are Cytoplasmic-facing; it reads LKRRTQRQRVTHGFVEVDPAASPEERHVANMQMSGYENPTYKYFEMQNQ. Residues 598-612 form a required for the interaction with kinesin heavy chain and for anterograde transport in axons region; sequence GYENPTYKYFEMQNQ. The YENPXY motif signature appears at 599–604; sequence YENPTY.

Belongs to the APP family. In terms of assembly, interacts (via cytoplasmic domain) with kinesin heavy chain. As to expression, expressed in the cervicothoracic ganglion (stellate ganglion) (at protein level).

It localises to the cell membrane. The protein localises to the cell projection. Its subcellular location is the axon. Acts as a kinesin I membrane receptor, thereby playing a role in axonal anterograde transport of cargo towards synapses in axons. The protein is Amyloid-beta precursor-like protein of Doryteuthis pealeii (Longfin inshore squid).